The following is a 279-amino-acid chain: L-ascorbate peroxidase 5, peroxisomal (279 aa).

Residue His-39 is the Proton acceptor of the active site. Positions 111–134 (PFTPGRKDADSADDGELPNPNEGA) are disordered. His-158 is a heme b binding site. K(+) contacts are provided by Thr-159, Thr-175, and Asp-182. Residues 251–271 (AVTQQTLGIAVAAAVVIFTIC) form a helical membrane-spanning segment. The short motif at 272–279 (YEASRRGK) is the AKR2A-binding sequence (ABS) required for peroxisome membrane targeting element.

It belongs to the peroxidase family. Ascorbate peroxidase subfamily. As to quaternary structure, interacts with AKR2A and AKR2B. The cofactor is heme b.

It localises to the peroxisome membrane. The catalysed reaction is L-ascorbate + H2O2 = L-dehydroascorbate + 2 H2O. In terms of biological role, plays a key role in hydrogen peroxide removal. This Arabidopsis thaliana (Mouse-ear cress) protein is L-ascorbate peroxidase 5, peroxisomal (APX5).